The primary structure comprises 143 residues: Ribonuclease VapC33 (143 aa).

2 residues coordinate Mg(2+): D5 and D108.

This sequence belongs to the PINc/VapC protein family. Requires Mg(2+) as cofactor.

Functionally, toxic component of a type II toxin-antitoxin (TA) system. An RNase. Its toxic effect is neutralized by coexpression with cognate antitoxin VapB33. This Mycobacterium tuberculosis (strain CDC 1551 / Oshkosh) protein is Ribonuclease VapC33.